A 261-amino-acid polypeptide reads, in one-letter code: Adenosylcobinamide-GDP ribazoletransferase (261 aa).

Helical transmembrane passes span 9 to 29, 41 to 61, 64 to 84, 114 to 134, 141 to 161, 196 to 216, and 235 to 255; these read LELF…VSLP, YFAL…SLAT, FSTN…TGAF, IGTY…LLLT, SLVP…ASLI, ATLL…SLIF, and CLGA…LAFL.

The protein belongs to the CobS family. Mg(2+) is required as a cofactor.

The protein resides in the cell inner membrane. The enzyme catalyses alpha-ribazole + adenosylcob(III)inamide-GDP = adenosylcob(III)alamin + GMP + H(+). It carries out the reaction alpha-ribazole 5'-phosphate + adenosylcob(III)inamide-GDP = adenosylcob(III)alamin 5'-phosphate + GMP + H(+). Its pathway is cofactor biosynthesis; adenosylcobalamin biosynthesis; adenosylcobalamin from cob(II)yrinate a,c-diamide: step 7/7. In terms of biological role, joins adenosylcobinamide-GDP and alpha-ribazole to generate adenosylcobalamin (Ado-cobalamin). Also synthesizes adenosylcobalamin 5'-phosphate from adenosylcobinamide-GDP and alpha-ribazole 5'-phosphate. This is Adenosylcobinamide-GDP ribazoletransferase from Vibrio cholerae serotype O1 (strain ATCC 39541 / Classical Ogawa 395 / O395).